A 472-amino-acid polypeptide reads, in one-letter code: Methanethiol oxidase (472 aa).

The residue at position 2 (A2) is an N-acetylalanine. A phosphoserine mark is found at S111, S371, and S467.

It belongs to the selenium-binding protein family. Interacts with USP33. In terms of processing, the N-terminus is blocked.

Its subcellular location is the nucleus. It is found in the cytoplasm. It localises to the cytosol. The protein localises to the membrane. It carries out the reaction methanethiol + O2 + H2O = hydrogen sulfide + formaldehyde + H2O2 + H(+). Its pathway is organosulfur degradation. Catalyzes the oxidation of methanethiol, an organosulfur compound known to be produced in substantial amounts by gut bacteria. Selenium-binding protein which may be involved in the sensing of reactive xenobiotics in the cytoplasm. May be involved in intra-Golgi protein transport. This chain is Methanethiol oxidase (SELENBP1), found in Pongo abelii (Sumatran orangutan).